Reading from the N-terminus, the 682-residue chain is MKQSHKTILLWALLIFLFVMIYNLISDGTSGEETLDTTEFKTLLQARIDERLADAGEGPALSDDRRALAQRAGEIASVTVEPNPNDNATYVLRYEGSGEDGLDPDKKTLVYGEYKGTIENLLTAAGISYEVKAKEESTFWQSLLISWLPMLLLFALFFFFMRQLQAGGGKAMSFGKSKARLLTDHQNKVTFKDVAGVEEAKDEVEEIIAFLKDPKKFTRLGGRIPKGVLMMGPPGTGKTLLARAIAGEAGVPFFSISGSDFVEMFVGVGASRVRDLFEQGKKNAPCIIFIDEIDAVGRHRGAGLGGGHDEREQTLNQLLVEMDGFESNDGVILIAATNRPDVLDPALLRPGRFDRRIIVPRPDLRGRTGILGVHTRKVPLSTEVALEVIARGTPGFSGADLESLVNEAALIAARRDKDRVDMEDFEDAKDKVMMGAERRSMIISDKEKRTTAYHEAGHALVAKLVGAETDPVHKVSIIPRGRALGVTQLLPTEDRLGFTREFALNKIAILMGGRLAEELVLKQKTTGAGDDIDKATDLARRMVTEWGMSDVIGPLNFASGGKQEVFLGRDLPQAEAYSQETAQRIDGEIRRIVTDQYERARRMLEENRDALERVARGLLEYETLDGNDIDTLCQGGRLSRPAVVSKPSADAESSVDEDEREARPALFPPLGKSGTDPEPEPA.

At 1 to 7 (MKQSHKT) the chain is on the cytoplasmic side. The chain crosses the membrane as a helical span at residues 8–28 (ILLWALLIFLFVMIYNLISDG). The Periplasmic segment spans residues 29 to 138 (TSGEETLDTT…YEVKAKEEST (110 aa)). The helical transmembrane segment at 139 to 159 (FWQSLLISWLPMLLLFALFFF) threads the bilayer. Residues 160–682 (FMRQLQAGGG…SGTDPEPEPA (523 aa)) are Cytoplasmic-facing. 232 to 239 (GPPGTGKT) is a binding site for ATP. H454 contacts Zn(2+). The active site involves E455. 2 residues coordinate Zn(2+): H458 and D531. Positions 638-682 (LSRPAVVSKPSADAESSVDEDEREARPALFPPLGKSGTDPEPEPA) are disordered.

The protein in the central section; belongs to the AAA ATPase family. In the C-terminal section; belongs to the peptidase M41 family. In terms of assembly, homohexamer. Zn(2+) serves as cofactor.

It is found in the cell inner membrane. Its function is as follows. Acts as a processive, ATP-dependent zinc metallopeptidase for both cytoplasmic and membrane proteins. Plays a role in the quality control of integral membrane proteins. This chain is ATP-dependent zinc metalloprotease FtsH, found in Haliangium ochraceum (strain DSM 14365 / JCM 11303 / SMP-2).